The sequence spans 447 residues: Omega-3 fatty acid desaturase, chloroplastic (447 aa).

The short motif at 167-171 (HDCGH) is the Histidine box-1 element. The Histidine box-2 motif lies at 203 to 207 (HRTHH). Positions 370 to 374 (HVIHH) match the Histidine box-3 motif.

Belongs to the fatty acid desaturase type 1 family.

Its subcellular location is the plastid. It is found in the chloroplast membrane. Its pathway is lipid metabolism; polyunsaturated fatty acid biosynthesis. Functionally, chloroplast omega-3 fatty acid desaturase introduces the third double bond in the biosynthesis of 16:3 and 18:3 fatty acids, important constituents of plant membranes. It is thought to use ferredoxin as an electron donor and to act on fatty acids esterified to galactolipids, sulfolipids and phosphatidylglycerol. The sequence is that of Omega-3 fatty acid desaturase, chloroplastic (FAD7) from Sesamum indicum (Oriental sesame).